The chain runs to 317 residues: CXXC-type zinc finger protein 5 (317 aa).

Positions 1-49 (MSSLSSGPQDTGGSSSSSSNGSSGSGPKAGVADKSAAVAAAAPASVADD) are enriched in low complexity. Residues 1-96 (MSSLSSGPQD…GSGGGSMMGG (96 aa)) form a disordered region. Residues 83 to 94 (GGSGGSGGGSMM) show a composition bias toward gly residues. The CXXC-type zinc-finger motif lies at 251–292 (GKKKRKRCGMCAPCRRRINCEQCSSCRNRKTGHQICKFRKCE). A Nuclear localization signal motif is present at residues 252–257 (KKKRKR). Zn(2+) is bound by residues Cys258, Cys261, Cys264, Cys270, Cys273, Cys276, Cys286, and Cys291.

As to quaternary structure, interacts with DVL1. Interacts with RBPJ.

It is found in the nucleus. It localises to the cytoplasm. Functionally, may indirectly participate in activation of the NF-kappa-B and MAPK pathways. Acts as a mediator of BMP4-mediated modulation of canonical Wnt signaling activity in neural stem cells. Required for DNA damage-induced ATM phosphorylation, p53 activation and cell cycle arrest. Involved in myelopoiesis. Binds to the oxygen responsive element of COX4I2 and represses its transcription under hypoxia conditions (4% oxygen), as well as normoxia conditions (20% oxygen). May repress COX4I2 transactivation induced by CHCHD2 and RBPJ. Binds preferentially to DNA containing cytidine-phosphate-guanosine (CpG) dinucleotides over CpH (H=A, T, and C), hemimethylated-CpG and hemimethylated-hydroxymethyl-CpG. The protein is CXXC-type zinc finger protein 5 (CXXC5) of Bos taurus (Bovine).